The sequence spans 449 residues: UDP-N-acetylmuramoylalanine--D-glutamate ligase (449 aa).

107-113 (GSNGKST) is a binding site for ATP.

The protein belongs to the MurCDEF family.

The protein localises to the cytoplasm. The catalysed reaction is UDP-N-acetyl-alpha-D-muramoyl-L-alanine + D-glutamate + ATP = UDP-N-acetyl-alpha-D-muramoyl-L-alanyl-D-glutamate + ADP + phosphate + H(+). Its pathway is cell wall biogenesis; peptidoglycan biosynthesis. Cell wall formation. Catalyzes the addition of glutamate to the nucleotide precursor UDP-N-acetylmuramoyl-L-alanine (UMA). This chain is UDP-N-acetylmuramoylalanine--D-glutamate ligase, found in Hydrogenovibrio crunogenus (strain DSM 25203 / XCL-2) (Thiomicrospira crunogena).